Reading from the N-terminus, the 330-residue chain is Thiosulfate transporter TsuA (330 aa).

Over 1-2 (MI) the chain is Periplasmic. Residues 3–18 (WTGLLVGFLFGIVLQR) traverse the membrane as a helical segment. Residues 19–36 (GRICFNSAFRDVLLFKDN) are Cytoplasmic-facing. The chain crosses the membrane as a helical span at residues 37-59 (YLFKLAVFTLALEMILFVLLSQV). Over 60 to 70 (GLMQMNPKPLN) the chain is Periplasmic. The helical transmembrane segment at 71 to 87 (LVGNIIGGFVFGLGMVL) threads the bilayer. Over 88 to 102 (AGGCASGVTYRVGEG) the chain is Cytoplasmic. A helical transmembrane segment spans residues 103–121 (LTTAWFAALFYGLGAYATK). Residues 122 to 162 (SGAFSWWLSWVGQFKSPLSVEESAYYVKGAGPTISSVLGLN) lie on the Periplasmic side of the membrane. Residues 163 to 180 (PWIPALVIAALFILWAFG) traverse the membrane as a helical segment. Residues 181–189 (TKTTSRETK) lie on the Cytoplasmic side of the membrane. A helical transmembrane segment spans residues 190-211 (FNWKIASVCLALVAGLGFITST). Topologically, residues 212–239 (LSGRKYGLGITGGWINLFQGFLTNSPLN) are periplasmic. A helical membrane pass occupies residues 240–258 (WEGLEIVGIILGAGVAAAV). The Cytoplasmic portion of the chain corresponds to 259–269 (AGEFKLRMPKN). A helical membrane pass occupies residues 270 to 289 (PVTYLQVGIGGLLMGIGAVT). Residues 290–306 (AGGCNIGHFLTGVPQLA) are Periplasmic-facing. The chain crosses the membrane as a helical span at residues 307–326 (LSSWLASIFFILGNWTMAWI). Residues 327–330 (LFRR) are Cytoplasmic-facing.

The protein belongs to the TsuA/YedE (TC 9.B.102) family.

The protein resides in the cell inner membrane. The enzyme catalyses thiosulfate(in) = thiosulfate(out). Functionally, mediates thiosulfate uptake. This Spirochaeta thermophila (strain ATCC 700085 / DSM 6578 / Z-1203) protein is Thiosulfate transporter TsuA.